Here is a 79-residue protein sequence, read N- to C-terminus: Acyl carrier protein (79 aa).

Residues 4-79 (AEIKDKVYDI…QAIDYIVNKK (76 aa)) enclose the Carrier domain. Ser39 carries the post-translational modification O-(pantetheine 4'-phosphoryl)serine.

Belongs to the acyl carrier protein (ACP) family. Post-translationally, 4'-phosphopantetheine is transferred from CoA to a specific serine of apo-ACP by AcpS. This modification is essential for activity because fatty acids are bound in thioester linkage to the sulfhydryl of the prosthetic group.

Its subcellular location is the cytoplasm. It participates in lipid metabolism; fatty acid biosynthesis. Functionally, carrier of the growing fatty acid chain in fatty acid biosynthesis. The protein is Acyl carrier protein of Chlorobaculum parvum (strain DSM 263 / NCIMB 8327) (Chlorobium vibrioforme subsp. thiosulfatophilum).